The following is a 106-amino-acid chain: Cytochrome c2 (106 aa).

Positions 19, 22, 23, and 84 each coordinate heme c.

It belongs to the cytochrome c family. Binds 1 heme c group covalently per subunit.

The sequence is that of Cytochrome c2 from Rhodopila globiformis (Rhodopseudomonas globiformis).